The following is a 388-amino-acid chain: Integrase (388 aa).

One can recognise a Core-binding (CB) domain in the interval 70-151 (YTVADAVNDW…CLNRAVKRAM (82 aa)). The Tyr recombinase domain maps to 173–379 (RPSKALTFAQ…VIQTGAVVMD (207 aa)). Active-site residues include Arg-208, Lys-249, Arg-330, and His-353. Tyr-363 (O-(3'-phospho-DNA)-tyrosine intermediate) is an active-site residue.

Belongs to the 'phage' integrase family.

Functionally, required for integration of pSAM2. The chain is Integrase (int) from Streptomyces ambofaciens.